We begin with the raw amino-acid sequence, 191 residues long: Fe/S biogenesis protein NfuA (191 aa).

C149 and C152 together coordinate [4Fe-4S] cluster.

Belongs to the NfuA family. In terms of assembly, homodimer. Requires [4Fe-4S] cluster as cofactor.

Involved in iron-sulfur cluster biogenesis. Binds a 4Fe-4S cluster, can transfer this cluster to apoproteins, and thereby intervenes in the maturation of Fe/S proteins. Could also act as a scaffold/chaperone for damaged Fe/S proteins. This Citrobacter koseri (strain ATCC BAA-895 / CDC 4225-83 / SGSC4696) protein is Fe/S biogenesis protein NfuA.